The sequence spans 414 residues: Enolase (414 aa).

Residue Gln-162 participates in (2R)-2-phosphoglycerate binding. Glu-204 serves as the catalytic Proton donor. Mg(2+) contacts are provided by Asp-239, Glu-280, and Asp-307. (2R)-2-phosphoglycerate is bound by residues Lys-332, Arg-361, Ser-362, and Lys-383. Catalysis depends on Lys-332, which acts as the Proton acceptor.

This sequence belongs to the enolase family. Mg(2+) serves as cofactor.

Its subcellular location is the cytoplasm. The protein localises to the secreted. It localises to the cell surface. The enzyme catalyses (2R)-2-phosphoglycerate = phosphoenolpyruvate + H2O. It functions in the pathway carbohydrate degradation; glycolysis; pyruvate from D-glyceraldehyde 3-phosphate: step 4/5. Functionally, catalyzes the reversible conversion of 2-phosphoglycerate (2-PG) into phosphoenolpyruvate (PEP). It is essential for the degradation of carbohydrates via glycolysis. In Campylobacter jejuni (strain RM1221), this protein is Enolase.